Consider the following 353-residue polypeptide: Probable dual-specificity RNA methyltransferase RlmN (353 aa).

The active-site Proton acceptor is Glu104. Positions 112–341 (DGGRKTICIS…ILNRRSPGKD (230 aa)) constitute a Radical SAM core domain. Cys119 and Cys346 form a disulfide bridge. The [4Fe-4S] cluster site is built by Cys126, Cys130, and Cys133. Residues 173–174 (GE), Ser205, 228–230 (SLN), and Asn304 each bind S-adenosyl-L-methionine. Residue Cys346 is the S-methylcysteine intermediate of the active site.

Belongs to the radical SAM superfamily. RlmN family. The cofactor is [4Fe-4S] cluster.

It is found in the cytoplasm. It catalyses the reaction adenosine(2503) in 23S rRNA + 2 reduced [2Fe-2S]-[ferredoxin] + 2 S-adenosyl-L-methionine = 2-methyladenosine(2503) in 23S rRNA + 5'-deoxyadenosine + L-methionine + 2 oxidized [2Fe-2S]-[ferredoxin] + S-adenosyl-L-homocysteine. The catalysed reaction is adenosine(37) in tRNA + 2 reduced [2Fe-2S]-[ferredoxin] + 2 S-adenosyl-L-methionine = 2-methyladenosine(37) in tRNA + 5'-deoxyadenosine + L-methionine + 2 oxidized [2Fe-2S]-[ferredoxin] + S-adenosyl-L-homocysteine. In terms of biological role, specifically methylates position 2 of adenine 2503 in 23S rRNA and position 2 of adenine 37 in tRNAs. The protein is Probable dual-specificity RNA methyltransferase RlmN of Leptospira interrogans serogroup Icterohaemorrhagiae serovar Lai (strain 56601).